The primary structure comprises 214 residues: C-type lectin domain family 4 member E (214 aa).

The Cytoplasmic portion of the chain corresponds to 1–22 (MNSTKSPASHHTERGCFKNSQV). The helical; Signal-anchor for type II membrane protein transmembrane segment at 23-45 (LSWTIAGASILFLSGCFITRCVV) threads the bilayer. Over 46–214 (TYRSSQISGQ…CEMPEISPLD (169 aa)) the chain is Extracellular. Cys-80 and Cys-91 are oxidised to a cystine. The C-type lectin domain occupies 87-206 (YQSSCYFFST…CFYSMPWICE (120 aa)). A glycan (N-linked (GlcNAc...) asparagine) is linked at Asn-107. 2 disulfides stabilise this stretch: Cys-108/Cys-205 and Cys-179/Cys-197. 7 residues coordinate Ca(2+): Val-117, Glu-123, Glu-169, Asn-171, Asn-193, Asp-194, and Glu-206. A Confers specificity for glucose/mannose-type carbohydrates motif is present at residues 169–171 (EPN).

As to quaternary structure, monomer and homodimer. Interacts with signaling adapter Fc receptor gamma chain/FCER1G to form a functional complex; the interaction is direct. Alternatively, acts as a bridge for interaction between CLEC4D and FCER1G. A heterodimer of CLEC4E and CLEC4D associates with FCER1G to form a functional complex. Interacts with SAP130 nuclear protein that is released from necrotic cells; the interaction is direct. Highly expressed in macrophages in response to stimulation with bacterial glycolipids and pro-inflammatory cytokines. Expressed in dendritic cells (at protein level) in response to stimulation with mycobacterial trehalose 6,6'-dimycolate (TDM).

It is found in the cell membrane. The protein localises to the cell projection. Its subcellular location is the phagocytic cup. Functionally, calcium-dependent lectin that acts as a pattern recognition receptor (PRR) of the innate immune system: recognizes damage-associated molecular patterns (DAMPs) of abnormal self and pathogen-associated molecular patterns (PAMPs) of bacteria and fungi. The PAMPs notably include mycobacterial trehalose 6,6'-dimycolate (TDM), a cell wall glycolipid with potent adjuvant immunomodulatory functions. Interacts with signaling adapter Fc receptor gamma chain/FCER1G to form a functional complex in myeloid cells. Binding of mycobacterial trehalose 6,6'-dimycolate (TDM) to this receptor complex leads to phosphorylation of the immunoreceptor tyrosine-based activation motif (ITAM) of FCER1G, triggering activation of SYK, CARD9 and NF-kappa-B, consequently driving maturation of antigen-presenting cells and shaping antigen-specific priming of T-cells toward effector T-helper 1 (Th1) and T-helper 17 (Th17) cell subtypes. Also recognizes alpha-mannose residues on pathogenic fungi of the genus Malassezia and mediates macrophage activation. Through recognition of DAMPs released upon nonhomeostatic cell death, enables immune sensing of damaged self and promotes inflammatory cell infiltration into the damaged tissue. This chain is C-type lectin domain family 4 member E, found in Mus musculus (Mouse).